A 206-amino-acid polypeptide reads, in one-letter code: Protein GET1 (206 aa).

The Lumenal segment spans residues Met-1–Leu-4. The helical transmembrane segment at Leu-5–Ala-24 threads the bilayer. The Cytoplasmic segment spans residues Thr-25 to Arg-110. Residues Ala-75–Ser-100 are a coiled coil. A helical membrane pass occupies residues Trp-111–Phe-131. Residues Thr-132 to Thr-155 lie on the Lumenal side of the membrane. A helical membrane pass occupies residues Val-156 to Val-172. Residues Gly-173–Gln-206 are Cytoplasmic-facing.

The protein belongs to the WRB/GET1 family. Interacts with GET3.

It localises to the endoplasmic reticulum membrane. Required for the post-translational delivery of tail-anchored (TA) proteins to the endoplasmic reticulum. Acts as a membrane receptor for soluble GET3, which recognizes and selectively binds the transmembrane domain of TA proteins in the cytosol. The protein is Protein GET1 of Ajellomyces capsulatus (strain H143) (Darling's disease fungus).